The following is a 40-amino-acid chain: Protein 4.1 (40 aa).

In Escherichia phage T7 (Bacteriophage T7), this protein is Protein 4.1.